The chain runs to 1571 residues: Pentafunctional AROM polypeptide 2 (1571 aa).

A 3-dehydroquinate synthase region spans residues 1–380 (MAEPTKISIL…YEPKASVVSN (380 aa)). Residues 44 to 46 (DTN), 81 to 84 (ENSK), 112 to 114 (GGV), and Asp117 each bind NAD(+). Residue Arg128 coordinates 7-phospho-2-dehydro-3-deoxy-D-arabino-heptonate. 137 to 138 (TT) contacts NAD(+). 2 residues coordinate 7-phospho-2-dehydro-3-deoxy-D-arabino-heptonate: Asp144 and Lys150. Lys159 contacts NAD(+). Asn160 provides a ligand contact to 7-phospho-2-dehydro-3-deoxy-D-arabino-heptonate. Residues 177–180 (FIDT) and Asn188 each bind NAD(+). Glu192 serves as a coordination point for Zn(2+). 7-phospho-2-dehydro-3-deoxy-D-arabino-heptonate-binding positions include 192–195 (EVIK) and Lys246. Catalysis depends on Glu256, which acts as the Proton acceptor; for 3-dehydroquinate synthase activity. 7-phospho-2-dehydro-3-deoxy-D-arabino-heptonate is bound by residues 260–264 (RNLLN) and His267. A Zn(2+)-binding site is contributed by His267. The active-site Proton acceptor; for 3-dehydroquinate synthase activity is the His271. Residues His283 and Lys352 each coordinate 7-phospho-2-dehydro-3-deoxy-D-arabino-heptonate. His283 contributes to the Zn(2+) binding site. The segment at 393-838 (VIPGVPKNLN…WDALKQKFGV (446 aa)) is EPSP synthase. Residue Cys820 is the For EPSP synthase activity of the active site. The shikimate kinase stretch occupies residues 859–1051 (NASIIIIGMR…RKKHLSFFVS (193 aa)). ATP is bound at residue 866-873 (GMRGAGKT). The segment at 1052 to 1273 (LTLPDLRESG…AAPGQLSAAE (222 aa)) is 3-dehydroquinase. His1175 serves as the catalytic Proton acceptor; for 3-dehydroquinate dehydratase activity. Lys1203 (schiff-base intermediate with substrate; for 3-dehydroquinate dehydratase activity) is an active-site residue. Positions 1286-1571 (AKKFAVLGKP…NAVLGTNETK (286 aa)) are shikimate dehydrogenase.

It in the N-terminal section; belongs to the sugar phosphate cyclases superfamily. Dehydroquinate synthase family. In the 2nd section; belongs to the EPSP synthase family. This sequence in the 3rd section; belongs to the shikimate kinase family. The protein in the 4th section; belongs to the type-I 3-dehydroquinase family. It in the C-terminal section; belongs to the shikimate dehydrogenase family. Homodimer. Requires Zn(2+) as cofactor.

It localises to the cytoplasm. It carries out the reaction 7-phospho-2-dehydro-3-deoxy-D-arabino-heptonate = 3-dehydroquinate + phosphate. The catalysed reaction is 3-dehydroquinate = 3-dehydroshikimate + H2O. The enzyme catalyses shikimate + NADP(+) = 3-dehydroshikimate + NADPH + H(+). It catalyses the reaction shikimate + ATP = 3-phosphoshikimate + ADP + H(+). It carries out the reaction 3-phosphoshikimate + phosphoenolpyruvate = 5-O-(1-carboxyvinyl)-3-phosphoshikimate + phosphate. It participates in metabolic intermediate biosynthesis; chorismate biosynthesis; chorismate from D-erythrose 4-phosphate and phosphoenolpyruvate: step 2/7. Its pathway is metabolic intermediate biosynthesis; chorismate biosynthesis; chorismate from D-erythrose 4-phosphate and phosphoenolpyruvate: step 3/7. It functions in the pathway metabolic intermediate biosynthesis; chorismate biosynthesis; chorismate from D-erythrose 4-phosphate and phosphoenolpyruvate: step 4/7. The protein operates within metabolic intermediate biosynthesis; chorismate biosynthesis; chorismate from D-erythrose 4-phosphate and phosphoenolpyruvate: step 5/7. It participates in metabolic intermediate biosynthesis; chorismate biosynthesis; chorismate from D-erythrose 4-phosphate and phosphoenolpyruvate: step 6/7. Its function is as follows. The AROM polypeptide catalyzes 5 consecutive enzymatic reactions in prechorismate polyaromatic amino acid biosynthesis. The polypeptide is Pentafunctional AROM polypeptide 2 (Talaromyces marneffei (strain ATCC 18224 / CBS 334.59 / QM 7333) (Penicillium marneffei)).